A 209-amino-acid polypeptide reads, in one-letter code: Pyroglutamyl-peptidase 1 (209 aa).

Residues Glu85, Cys149, and His168 contribute to the active site.

The protein belongs to the peptidase C15 family. As to quaternary structure, monomer.

It localises to the cytoplasm. It catalyses the reaction Release of an N-terminal pyroglutamyl group from a polypeptide, the second amino acid generally not being Pro.. In terms of biological role, removes 5-oxoproline from various penultimate amino acid residues except L-proline. The protein is Pyroglutamyl-peptidase 1 (Pgpep1) of Rattus norvegicus (Rat).